Reading from the N-terminus, the 183-residue chain is RFKKIRRLGALPGLTSKRPRSGSDLKNQLRSGKRSQYRIRLEEKQKLRFHYGLTERQLLKYVHIAGKAKGSTGQILLQLLEMRLDNILFRLGMASTIPGARQLVNHRHILVNGRIVDIPSYRCKPRDIITTNNKQRSKALIQNFIASSPRQEELPNHLTIDPFQYKGLVNQIIDSKWIGLKIN.

Residues 82-143 (MRLDNILFRL…KQRSKALIQN (62 aa)) enclose the S4 RNA-binding domain.

The protein belongs to the universal ribosomal protein uS4 family. In terms of assembly, part of the 30S ribosomal subunit. Contacts protein S5. The interaction surface between S4 and S5 is involved in control of translational fidelity.

Its subcellular location is the plastid. The protein resides in the chloroplast. Its function is as follows. One of the primary rRNA binding proteins, it binds directly to 16S rRNA where it nucleates assembly of the body of the 30S subunit. With S5 and S12 plays an important role in translational accuracy. In Freesia sp. (strain Lejeune 1997), this protein is Small ribosomal subunit protein uS4c (rps4).